Here is a 1257-residue protein sequence, read N- to C-terminus: Bifunctional autolysin (1257 aa).

A signal peptide spans 1–29 (MAKKFNYKLPSMVALTLVGSAVTAHQVQA). The span at 99–137 (QVNGDTRATQSTTSNNAKPVTKSTNTTAPKTNNNVTSAG) shows a compositional bias: polar residues. Disordered stretches follow at residues 99–150 (QVNG…NSEN), 173–217 (AAPK…KYKP), and 417–441 (TQST…PSTG). 2 stretches are compositionally biased toward low complexity: residues 173-208 (AAPK…AAAP) and 419-440 (STTT…TPST). Residues 197-776 (ASAQPRSAAA…AVAQPKTAVK (580 aa)) form an N-acetylmuramoyl-L-alanine amidase region. GW domains are found at residues 444–518 (TVAA…YNTA), 520–594 (SPVN…DTAK), 613–687 (TVSS…YNNA), 689–763 (SPVN…VPAA), 785–860 (TTQT…VQNL), 862–937 (KEVK…APTA), and 944–1018 (AAKD…KELI). Positions 777-1257 (AYAVTKPQTT…GKYFDIPQYK (481 aa)) are endo-beta-N-acetylglucosaminidase.

This sequence in the N-terminal section; belongs to the N-acetylmuramoyl-L-alanine amidase 2 family. The protein in the C-terminal section; belongs to the glycosyl hydrolase 73 family. As to quaternary structure, oligomer; forms a ring structure at the cell surface which is important for efficient partitioning of daughter cells after cell division. Undergoes proteolytic processing to generate the two extracellular lytic enzymes, probably at the septal region on the cell surface.

The protein localises to the secreted. The enzyme catalyses Hydrolyzes the link between N-acetylmuramoyl residues and L-amino acid residues in certain cell-wall glycopeptides.. It catalyses the reaction an N(4)-(oligosaccharide-(1-&gt;3)-[oligosaccharide-(1-&gt;6)]-beta-D-Man-(1-&gt;4)-beta-D-GlcNAc-(1-&gt;4)-alpha-D-GlcNAc)-L-asparaginyl-[protein] + H2O = an oligosaccharide-(1-&gt;3)-[oligosaccharide-(1-&gt;6)]-beta-D-Man-(1-&gt;4)-D-GlcNAc + N(4)-(N-acetyl-beta-D-glucosaminyl)-L-asparaginyl-[protein]. Endohydrolysis of the di-N-acetylchitobiosyl unit in high-mannose glycopeptides and glycoproteins containing the -[(Man)5(GlcNAc)2]-Asn structure. One N-acetyl-D-glucosamine residue remains attached to the protein; the rest of the oligosaccharide is released intact. Cleaves the peptidoglycan connecting the daughter cells at the end of the cell division cycle, resulting in the separation of the two newly divided cells. Acts as an autolysin in penicillin-induced lysis. The chain is Bifunctional autolysin (atl) from Staphylococcus aureus (strain MRSA252).